Consider the following 658-residue polypeptide: L-type lectin-domain containing receptor kinase V.4 (658 aa).

An N-terminal signal peptide occupies residues 1–25; sequence MSRTIGSRVIFLILALFCCTENSRG. A legume-lectin like region spans residues 26 to 248; it reads KLVMQGSAGF…RAMHYMLSWF (223 aa). Residues 26–280 are Extracellular-facing; it reads KLVMQGSAGF…EKSLVYRIVL (255 aa). N66 and N196 each carry an N-linked (GlcNAc...) asparagine glycan. Residues 281–301 traverse the membrane as a helical segment; it reads VTSLALVLFVALVASALSIFF. The Cytoplasmic segment spans residues 302–658; sequence YRRHKKVKEV…LTEPFTSRGR (357 aa). Residues 334–592 form the Protein kinase domain; the sequence is KGFKQLLGKG…LGVLCSHQAV (259 aa). ATP is bound by residues 340–348 and K363; that span reads LGKGGFGQV. Residue D460 is the Proton acceptor of the active site.

It in the C-terminal section; belongs to the protein kinase superfamily. Ser/Thr protein kinase family. This sequence in the N-terminal section; belongs to the leguminous lectin family.

Its subcellular location is the cell membrane. The catalysed reaction is L-seryl-[protein] + ATP = O-phospho-L-seryl-[protein] + ADP + H(+). The enzyme catalyses L-threonyl-[protein] + ATP = O-phospho-L-threonyl-[protein] + ADP + H(+). Involved in resistance response to the pathogenic oomycetes Phytophthora infestans and Phytophthora capsici and to the pathogenic bacteria Pseudomonas syringae. This Arabidopsis thaliana (Mouse-ear cress) protein is L-type lectin-domain containing receptor kinase V.4.